The chain runs to 283 residues: Pre-mRNA-splicing factor CWC23 (283 aa).

The J domain maps to 15-87 (NLYDVLELPT…DVRPHYDRWL (73 aa)).

The protein belongs to the DnaJ family. Belongs to the CWC complex (or CEF1-associated complex), a spliceosome sub-complex reminiscent of a late-stage spliceosome composed of the U2, U5 and U6 snRNAs and at least BUD13, BUD31, BRR2, CDC40, CEF1, CLF1, CUS1, CWC2, CWC15, CWC21, CWC22, CWC23, CWC24, CWC25, CWC27, ECM2, HSH155, IST3, ISY1, LEA1, MSL1, NTC20, PRP8, PRP9, PRP11, PRP19, PRP21, PRP22, PRP45, PRP46, SLU7, SMB1, SMD1, SMD2, SMD3, SMX2, SMX3, SNT309, SNU114, SPP2, SYF1, SYF2, RSE1 and YJU2.

The protein resides in the cytoplasm. Its subcellular location is the nucleus. Involved in pre-mRNA splicing. May be involved in endoplasmic reticulum-associated protein degradation (ERAD) and required for growth at low and high temperatures. This chain is Pre-mRNA-splicing factor CWC23 (CWC23), found in Saccharomyces cerevisiae (strain ATCC 204508 / S288c) (Baker's yeast).